Consider the following 139-residue polypeptide: Putative nickel-responsive regulator (139 aa).

Positions 79, 90, 92, and 98 each coordinate Ni(2+).

The protein belongs to the transcriptional regulatory CopG/NikR family. Ni(2+) is required as a cofactor.

In terms of biological role, transcriptional regulator. The chain is Putative nickel-responsive regulator from Trichlorobacter lovleyi (strain ATCC BAA-1151 / DSM 17278 / SZ) (Geobacter lovleyi).